A 304-amino-acid chain; its full sequence is MGQCVTKCKNPSSTLGSKNGDRDPSSKSHGRRSASHREEQLPTCGKPGGDILVNGTKKAEAAPEACQLPTSSGDAGREPKSNAEESSLQRLEELFRRYKDEREDAILEEGMERFCNDLCVDPTEFRVLLLAWKFQAATMCKFTRKEFFDGCKAISADSIDGICARFPSLLTEAKQEDKFKDLYRFTFQFGLDSEEGQRSLHREIAIALWKLVFTQNNPPVLDQWLNFLTENPSGIKGISRDTWNMFLNFTQVIGPDLSNYSEDEAWPSLFDTFVEWEMERRKREGEGRGALSSGPEGLCPEEQT.

Disordered regions lie at residues 1–87 (MGQC…EESS) and 284–304 (EGEGRGALSSGPEGLCPEEQT). Residue Gly2 is the site of N-myristoyl glycine attachment. Residues 86–278 (SSLQRLEELF…LFDTFVEWEM (193 aa)) enclose the DCUN1 domain.

Part of a complex containing DCUN1D3, CUL3 and RBX1. Interacts (via the DCUN1 domain) with the unneddylated cullins: interacts with CUL1, CUL2, CUL3, CUL4A, CUL4B and CUL5; these interactions promote the cullin neddylation and the identity of the cullin dictates the affinity of the interaction. Interacts preferentially with CUL3; this interaction triggers the relocalization of CUL3 to the cell membrane where CUL3 is neddylated. Interacts (via DCUN1 domain) with RBX1. May also interact with regulators or subunits of cullin-RING ligases such as RNF7, ELOB and DDB1; these interactions are bridged by cullins. Interacts (via DCUN1 domain) with CAND1; this interaction is bridged by cullins and strongly inhibits cullin neddylation. These CAND-cullin-DCNL complexes can only be neddylated in the presence of a substrate adapter. Interacts (via DCUN1 domain) with the N-terminally acetylated form of UBE2M and UBE2F.

The protein localises to the cell membrane. The protein resides in the cytoplasm. Its subcellular location is the nucleus. It localises to the perinuclear region. Its function is as follows. Contributes to the neddylation of all cullins by transferring NEDD8 from N-terminally acetylated NEDD8-conjugating E2s enzyme to different cullin C-terminal domain-RBX complexes and may play a role in the cell cycle progression by regulating the SCF ubiquitin E3 ligase complex, after UV damage. At the cell membrane, can promote and as well inhibit cullins neddylation. The polypeptide is DCN1-like protein 3 (Bos taurus (Bovine)).